A 317-amino-acid polypeptide reads, in one-letter code: Ribosomal RNA small subunit methyltransferase A (317 aa).

6 residues coordinate S-adenosyl-L-methionine: N37, V39, G64, E85, D115, and N134. Positions 293–317 are disordered; the sequence is GGSDEATSTGRDARAPDISGHASAS.

Belongs to the class I-like SAM-binding methyltransferase superfamily. rRNA adenine N(6)-methyltransferase family. RsmA subfamily.

Its subcellular location is the cytoplasm. The enzyme catalyses adenosine(1518)/adenosine(1519) in 16S rRNA + 4 S-adenosyl-L-methionine = N(6)-dimethyladenosine(1518)/N(6)-dimethyladenosine(1519) in 16S rRNA + 4 S-adenosyl-L-homocysteine + 4 H(+). Functionally, specifically dimethylates two adjacent adenosines (A1518 and A1519) in the loop of a conserved hairpin near the 3'-end of 16S rRNA in the 30S particle. May play a critical role in biogenesis of 30S subunits. The chain is Ribosomal RNA small subunit methyltransferase A from Mycobacterium bovis (strain BCG / Tokyo 172 / ATCC 35737 / TMC 1019).